A 404-amino-acid polypeptide reads, in one-letter code: Glucose-1-phosphate adenylyltransferase (404 aa).

Residues Tyr99, Gly164, 179 to 180, and Ser197 contribute to the alpha-D-glucose 1-phosphate site; that span reads EK.

The protein belongs to the bacterial/plant glucose-1-phosphate adenylyltransferase family.

The enzyme catalyses alpha-D-glucose 1-phosphate + ATP + H(+) = ADP-alpha-D-glucose + diphosphate. It participates in glycan biosynthesis; glycogen biosynthesis. Its function is as follows. Involved in the biosynthesis of ADP-glucose, a building block, required in the biosynthesis of maltose-1-phosphate (M1P) and in the elongation reactions to produce linear alpha-1,4-glucans. Catalyzes the reaction between ATP and alpha-D-glucose 1-phosphate (G1P) to produce pyrophosphate and ADP-Glc. The sequence is that of Glucose-1-phosphate adenylyltransferase from Mycolicibacterium gilvum (strain PYR-GCK) (Mycobacterium gilvum (strain PYR-GCK)).